Consider the following 746-residue polypeptide: Dystrobrevin alpha (746 aa).

Residues 1–288 (MIEDSGKRGN…SHSNQHQMKE (288 aa)) form an interaction with MAGEE1 region. The ZZ-type zinc-finger motif lies at 238–294 (FHPVECSYCHSESMMGFRYRCQQCHNYQLCQDCFWRGHAGGSHSNQHQMKEYTSWKS). Residues C243, C246, C258, C261, C267, C270, H280, and H284 each contribute to the Zn(2+) site. The interval 397 to 447 (DRLADEHVLIGLYVNMLRNDPPCMLESSNRLDEEHRLIARYAARLAAESSS) is syntrophin-binding region. Residues 458–557 (DISFTIDANK…KLLKEEELKQ (100 aa)) are a coiled coil. Disordered regions lie at residues 555-577 (LKQG…SRPI), 646-667 (ETES…APSP), and 684-721 (YIHG…VRQL). Residues 563–576 (SSPRSSPSHTISRP) are compositionally biased toward low complexity. At S666 the chain carries Phosphoserine.

The protein belongs to the dystrophin family. Dystrobrevin subfamily. In terms of assembly, interacts with dystrophin, utrophin and the syntrophins SNTA1, SNTB1, SNTB2, SNTG1 and SNTG2. Binds dystrobrevin binding protein 1. Interacts with MAGEE1. Interacts with Ctnnal1. The interaction is required for correct localization of both Ctnnal1 and Dtna. As to quaternary structure, does not interact with utrophin. Does not interact with syntrophin. In terms of processing, phosphorylation of isoform 2 on tyrosine kinase substrate domain present in the C-terminus. As to expression, expressed in skeletal muscle, heart, lung and brain. Sarcolemma and neuromuscular junction in skeletal muscle. Isoform 2 is restricted to the neuromuscular junction. Isoforms 5 and 6 are only expressed in muscle.

The protein localises to the cytoplasm. It is found in the synapse. The protein resides in the cell membrane. Its function is as follows. Involved in synapse maturation and required for normal muscle function. The polypeptide is Dystrobrevin alpha (Dtna) (Mus musculus (Mouse)).